The primary structure comprises 95 residues: FMRFamide-like neuropeptides 16 (95 aa).

Residues Met-1 to Ala-24 form the signal peptide. Positions Ala-25–Ala-58 are excised as a propeptide. Residues Phe-67, Phe-77, and Phe-87 each carry the phenylalanine amide modification. A propeptide spanning residues Ser-90–Gln-95 is cleaved from the precursor.

This sequence belongs to the FARP (FMRFamide related peptide) family.

Its subcellular location is the secreted. Functionally, FMRFamides and FMRFamide-like peptides are neuropeptides. AQTFVRF-amide inhibits the activity of dissected pharyngeal myogenic muscle system. The polypeptide is FMRFamide-like neuropeptides 16 (flp-16) (Caenorhabditis briggsae).